The primary structure comprises 163 residues: Nucleotide-binding protein HSM_1099 (163 aa).

Belongs to the YajQ family.

In terms of biological role, nucleotide-binding protein. This Histophilus somni (strain 2336) (Haemophilus somnus) protein is Nucleotide-binding protein HSM_1099.